Here is a 1203-residue protein sequence, read N- to C-terminus: Delphilin (1203 aa).

A PDZ 1 domain is found at 1 to 79 (MPATNQGWPE…VPPSLGVLPG (79 aa)). The S-palmitoyl cysteine moiety is linked to residue Ala3. A disordered region spans residues 215 to 270 (GAQRLRRSRSEERPERLLVSTRASAAPRRPDEPPPRKATSLLGGRTGPGGPRRTVR). The span at 231 to 241 (LLVSTRASAAP) shows a compositional bias: low complexity. A PDZ 2 domain is found at 268-345 (TVRVYKGNKS…MPTLVVEEGP (78 aa)). Ser303 carries the post-translational modification Phosphoserine. Disordered regions lie at residues 466-541 (ESSL…TPNP), 563-586 (IGTMSKSRASPPVPSLVGTSGPRT), 611-656 (LASP…PPSR), and 710-821 (SFVT…SHMS). Residues 500–509 (RSQGLETSLS) are compositionally biased toward polar residues. Ser572, Ser613, Ser644, and Ser647 each carry phosphoserine. Residues 611-625 (LASPSSSESHPYASL) are compositionally biased toward low complexity. Residues 715–740 (ERSSASECVSSSEEGSSLTYSSISDH) show a composition bias toward low complexity. The segment covering 741-756 (IPPPPLSPPPPPPLPF) has biased composition (pro residues). Residues 774–784 (QSLTKPLTQIN) show a composition bias toward polar residues. The segment covering 786–803 (PVPPPPPPPLPPPVPCAP) has biased composition (pro residues). One can recognise an FH2 domain in the interval 812–1203 (HRRSETSHMS…SSGMVSPLAW (392 aa)).

In terms of assembly, interacts with C-terminus of the glutamate receptor GRID2 via PDZ domain. Isoform 2 also interacts with Profilin-2/PFN2 and with the monocarboxylate transporter SLC16A7 via PDZ domain. The interaction of isoform 2 with GRID2 is dependent on GRID2 phosphorylation by PKA. Isoform 2 is palmitoylated. Palmitoylation of isoform 2 is necessary for the enhanced cell surface expression of GRID2, and is also responsible for the accumulation of isoform 2 within dendritic spines. Isoform 1 and isoform 2 are differentially localized, probably modulating GRID2 signaling in neurons. Isoform 1 is expressed in the cerebellum, but not in the cerebral cortex. Isoform 2 is expressed in the cell body of purkinge cells of the cerebellum and weakly expressed in the cerebrum and the brainstem as well as various nuclei of the thalamus. Isoform 2 is highly expressed in the cerebral cortex than in the cerebellum. Isoform 3 is expressed in the cerebellum and cerebrum.

It localises to the postsynaptic cell membrane. It is found in the cell projection. The protein localises to the dendritic spine. Its subcellular location is the synapse. The protein resides in the cell membrane. Postsynaptic scaffolding protein at the Purkinje cell synapse, where it may serve to link GRID2 with actin cytoskeleton and various signaling molecules. The polypeptide is Delphilin (Grid2ip) (Mus musculus (Mouse)).